Reading from the N-terminus, the 505-residue chain is Zinc metalloproteinase/disintegrin (505 aa).

A signal peptide spans 1–20; that stretch reads MIQVLLVIICLAAFPYQGTS. Positions 21–214 are excised as a propeptide; it reads IILESGNVND…PIKKASQSNL (194 aa). 2 repeat units span residues 153–179 and 180–206. Residues 220 to 416 form the Peptidase M12B domain; it reads RYIELVIVAD…QKPQCILNKP (197 aa). E223 and D307 together coordinate Ca(2+). Residue H356 coordinates Zn(2+). Residue E357 is part of the active site. Zn(2+)-binding residues include H360 and H366. 2 disulfides stabilise this stretch: C371-C395 and C373-C378. Residues C411 and N414 each contribute to the Ca(2+) site. Residues 417–432 constitute a propeptide that is removed on maturation; sequence LRTDTVSTPVSGNELL. The Disintegrin domain maps to 424 to 505; that stretch reads TPVSGNELLE…AGCPRNPFHA (82 aa). 6 disulfide bridges follow: C438/C453, C440/C448, C447/C470, C461/C467, C466/C491, and C479/C498. The short motif at 483–485 is the Cell attachment site element; that stretch reads RGD.

Belongs to the venom metalloproteinase (M12B) family. P-II subfamily. P-IIa sub-subfamily. In terms of assembly, monomer. Zn(2+) serves as cofactor. As to expression, expressed by the venom gland.

The protein resides in the secreted. Its function is as follows. Impairs hemostasis in the envenomed animal. Inhibits platelet aggregation induced by ADP, thrombin, platelet-activating factor and collagen. Acts by inhibiting fibrinogen interaction with platelet receptors GPIIb/GPIIIa (ITGA2B/ITGB3). The chain is Zinc metalloproteinase/disintegrin from Gloydius brevicauda (Korean slamosa snake).